The chain runs to 398 residues: Interleukin-1 receptor type 2 (398 aa).

The first 13 residues, 1-13 (MLRLYVLVMGVSA), serve as a signal peptide directing secretion. Residues 14–343 (FTLQPAAHTG…FQTLRTTVKE (330 aa)) are Extracellular-facing. Ig-like C2-type domains are found at residues 18–124 (PAAH…IELR), 134–223 (PFIS…ITRS), and 237–349 (PVII…STFS). 3 disulfide bridges follow: C28–C116, C50–C108, and C152–C207. N-linked (GlcNAc...) asparagine glycans are attached at residues N66, N72, and N112. N-linked (GlcNAc...) asparagine glycans are attached at residues N219 and N277. A disulfide bridge connects residues C258 and C326. Residues 329 to 343 (HNTLSFQTLRTTVKE) are contains proteolytic cleavage site. The helical transmembrane segment at 344–369 (ASSTFSWGIVLAPLSLAFLVLGGIWM) threads the bilayer. The Cytoplasmic segment spans residues 370-398 (HRRCKHRTGKADGLTVLWPHHQDFQSYPK).

This sequence belongs to the interleukin-1 receptor family. In terms of assembly, associates with IL1RAP to form a non-signaling interleukin-1 receptor complex. In terms of processing, a soluble form (sIL1R2) can also be produced by proteolytic cleavage at the cell surface (shedding) involving a metalloproteinase; hovever, several sIL1R2 forms ranging from 45 and 60 kDa are reported.

The protein localises to the secreted. The protein resides in the cell membrane. Functionally, non-signaling receptor for IL1A, IL1B and IL1RN. Reduces IL1B activities. Serves as a decoy receptor by competitive binding to IL1B and preventing its binding to IL1R1. Also modulates cellular response through non-signaling association with IL1RAP after binding to IL1B. IL1R2 (membrane and secreted forms) preferentially binds IL1B and poorly IL1A and IL1RN. The secreted IL1R2 recruits secreted IL1RAP with high affinity; this complex formation may be the dominant mechanism for neutralization of IL1B by secreted/soluble receptors. In Homo sapiens (Human), this protein is Interleukin-1 receptor type 2 (IL1R2).